The sequence spans 404 residues: Probable tRNA sulfurtransferase (404 aa).

Residues 60–165 form the THUMP domain; the sequence is RSVIEALKPV…DEAAYLSHED (106 aa). ATP contacts are provided by residues 183–184, 208–209, Arg-265, Gly-287, and Gln-296; these read ML and HF.

The protein belongs to the ThiI family.

The protein localises to the cytoplasm. It carries out the reaction [ThiI sulfur-carrier protein]-S-sulfanyl-L-cysteine + a uridine in tRNA + 2 reduced [2Fe-2S]-[ferredoxin] + ATP + H(+) = [ThiI sulfur-carrier protein]-L-cysteine + a 4-thiouridine in tRNA + 2 oxidized [2Fe-2S]-[ferredoxin] + AMP + diphosphate. It catalyses the reaction [ThiS sulfur-carrier protein]-C-terminal Gly-Gly-AMP + S-sulfanyl-L-cysteinyl-[cysteine desulfurase] + AH2 = [ThiS sulfur-carrier protein]-C-terminal-Gly-aminoethanethioate + L-cysteinyl-[cysteine desulfurase] + A + AMP + 2 H(+). It functions in the pathway cofactor biosynthesis; thiamine diphosphate biosynthesis. In terms of biological role, catalyzes the ATP-dependent transfer of a sulfur to tRNA to produce 4-thiouridine in position 8 of tRNAs, which functions as a near-UV photosensor. Also catalyzes the transfer of sulfur to the sulfur carrier protein ThiS, forming ThiS-thiocarboxylate. This is a step in the synthesis of thiazole, in the thiamine biosynthesis pathway. The sulfur is donated as persulfide by IscS. The sequence is that of Probable tRNA sulfurtransferase from Streptococcus equi subsp. zooepidemicus (strain H70).